A 2873-amino-acid polypeptide reads, in one-letter code: WD repeat-containing protein 87 (2873 aa).

7 WD repeats span residues 108–146 (PCRF…TGLQ), 199–239 (TSSG…PLHS), 242–283 (AHQS…RRLE), 368–407 (SILD…CPAK), 415–460 (NSQD…RLEK), 516–553 (LSSC…SSGS), and 565–604 (LHLC…IGIL). Disordered stretches follow at residues 1049–1124 (FSLD…ESGT), 1177–1199 (DKRD…GKEA), 1392–1413 (EKKT…ERKV), 1531–1607 (SKSK…QEER), and 2199–2338 (KRKE…EEVD). Composition is skewed to basic residues over residues 1089–1101 (VKKH…RGLK) and 1187–1197 (KLKKKHKKKGK). Over residues 1549-1574 (EVSREGEEKEQQVTEEQRHIQEEHKW) the composition is skewed to basic and acidic residues. Positions 1575-1586 (ARIHRKRARAEK) are enriched in basic residues. 2 stretches are compositionally biased toward basic and acidic residues: residues 1587–1607 (KRAQ…QEER) and 2204–2213 (KRGDKPKEKF). A compositionally biased stretch (acidic residues) spans 2244–2276 (SSEEEEEREEEEEREEEEEREEEEERKEEEEGE). Residues 2277-2287 (EKQVEKEEEEK) are compositionally biased toward basic and acidic residues. Residues 2304 to 2337 (EVFEEKEEIMSEEETESLSDEEEEEESCSLEEEV) show a composition bias toward acidic residues.

This Homo sapiens (Human) protein is WD repeat-containing protein 87 (WDR87).